Reading from the N-terminus, the 181-residue chain is Oligoribonuclease (181 aa).

Positions 8–171 constitute an Exonuclease domain; sequence LVWIDMEMTG…DDIRESIAEL (164 aa). The active site involves Tyr-129.

The protein belongs to the oligoribonuclease family.

It is found in the cytoplasm. 3'-to-5' exoribonuclease specific for small oligoribonucleotides. The protein is Oligoribonuclease of Aeromonas hydrophila subsp. hydrophila (strain ATCC 7966 / DSM 30187 / BCRC 13018 / CCUG 14551 / JCM 1027 / KCTC 2358 / NCIMB 9240 / NCTC 8049).